A 132-amino-acid polypeptide reads, in one-letter code: Chemokine-like protein TAFA-5 (132 aa).

Positions 1 to 43 (MAPSPRTGSRQDATALPSMSSTFWAFMILASLLIAYCSQLAAG) are cleaved as a signal peptide. An N-linked (GlcNAc...) asparagine glycan is attached at Asn-113.

The protein belongs to the TAFA family. As to expression, expressed in the subcutaneous and perirenal adipose tissue (at protein level). Highly expressed in adipose tissue with moderate expression in the brain and ovary. Isoform 2: Brain-specific.

The protein localises to the secreted. Functionally, acts as a chemokine-like protein by regulating cell proliferation and migration through activation of G protein-coupled receptors (GPCRs), such as S1PR2 and FPR2. Stimulates chemotactic migration of macrophages mediated by the MAPK3/ERK1 and AKT1 pathway. Blocks TNFSF11/RANKL-induced osteoclast formation from macrophages by inhibiting up-regulation of osteoclast fusogenic and differentiation genes. Stimulation of macrophage migration and inhibition of osteoclast formation is mediated via GPCR FPR2. Acts as an adipokine by negatively regulating vascular smooth muscle cell (VSMC) proliferation and migration in response to platelet-derived growth factor stimulation via GPCR S1PR2 and G protein GNA12/GNA13-transmitted RHOA signaling. Inhibits injury-induced cell proliferation and neointima formation in the femoral arteries. The sequence is that of Chemokine-like protein TAFA-5 from Homo sapiens (Human).